Reading from the N-terminus, the 266-residue chain is Glucosamine-6-phosphate deaminase (266 aa).

Residue aspartate 72 is the Proton acceptor; for enolization step of the active site. Aspartate 141 serves as the catalytic For ring-opening step. Histidine 143 acts as the Proton acceptor; for ring-opening step in catalysis. Glutamate 148 serves as the catalytic For ring-opening step.

It belongs to the glucosamine/galactosamine-6-phosphate isomerase family. NagB subfamily. Homohexamer; trimer of disulfide-linked dimers.

It carries out the reaction alpha-D-glucosamine 6-phosphate + H2O = beta-D-fructose 6-phosphate + NH4(+). Its pathway is amino-sugar metabolism; N-acetylneuraminate degradation; D-fructose 6-phosphate from N-acetylneuraminate: step 5/5. Allosterically activated by N-acetylglucosamine 6-phosphate (GlcNAc6P). Its function is as follows. Catalyzes the reversible isomerization-deamination of glucosamine 6-phosphate (GlcN6P) to form fructose 6-phosphate (Fru6P) and ammonium ion. This chain is Glucosamine-6-phosphate deaminase, found in Shigella dysenteriae serotype 1 (strain Sd197).